Reading from the N-terminus, the 78-residue chain is Translational regulator CsrA (78 aa).

The protein belongs to the CsrA/RsmA family. As to quaternary structure, homodimer; the beta-strands of each monomer intercalate to form a hydrophobic core, while the alpha-helices form wings that extend away from the core.

It localises to the cytoplasm. In terms of biological role, a translational regulator that binds mRNA to regulate translation initiation and/or mRNA stability. Usually binds in the 5'-UTR at or near the Shine-Dalgarno sequence preventing ribosome-binding, thus repressing translation. Its main target seems to be the major flagellin gene, while its function is anatagonized by FliW. The polypeptide is Translational regulator CsrA (Geobacter metallireducens (strain ATCC 53774 / DSM 7210 / GS-15)).